A 107-amino-acid polypeptide reads, in one-letter code: MTTFTLADLDRIVRSRAAASPEESYTAKLIAAGPGKPAKKLGEEAVEAAIAAVQGDRTSLVSEAADVLYHLLVVLAGGGIPLEEVMAELERRTTQSGLAEKAARRRP.

This sequence belongs to the PRA-PH family.

It is found in the cytoplasm. The catalysed reaction is 1-(5-phospho-beta-D-ribosyl)-ATP + H2O = 1-(5-phospho-beta-D-ribosyl)-5'-AMP + diphosphate + H(+). Its pathway is amino-acid biosynthesis; L-histidine biosynthesis; L-histidine from 5-phospho-alpha-D-ribose 1-diphosphate: step 2/9. This Methylobacterium nodulans (strain LMG 21967 / CNCM I-2342 / ORS 2060) protein is Phosphoribosyl-ATP pyrophosphatase.